The chain runs to 145 residues: Synaptojanin-2-binding protein (145 aa).

Residues 1-117 lie on the Cytoplasmic side of the membrane; it reads MNGRVDYLVS…VHRGDGEPSG (117 aa). A PDZ domain is found at 13-100; that stretch reads EINLTRGPSG…AVSLRVQHRL (88 aa). A helical transmembrane segment spans residues 118–138; it reads VPVAVVLLPVFALTLVAVWAF. The Mitochondrial intermembrane portion of the chain corresponds to 139–145; it reads VRYRKQL.

As to quaternary structure, binds (via the PDZ domain) to isoform 2A of SYNJ2 (via the unique motif in the C-terminus). Interacts (via C-terminus) with RALBP1. Interacts (via PDZ domain) with ACVR2A (via C-terminus) and ACVR2B (via C-terminus). Forms a ternary complex with ACVR2A and RALBP1. Interacts with MAPK12. Interacts with DLL1; enhances DLL1 protein stability, and promotes notch signaling in endothelial cells. Widely expressed.

It localises to the mitochondrion outer membrane. Functionally, regulates endocytosis of activin type 2 receptor kinases through the Ral/RALBP1-dependent pathway and may be involved in suppression of activin-induced signal transduction. The sequence is that of Synaptojanin-2-binding protein (Synj2bp) from Rattus norvegicus (Rat).